Reading from the N-terminus, the 145-residue chain is Large ribosomal subunit protein uL15 (145 aa).

Residues 1 to 50 (MLHTIKPVTNARKSTKRLGRGPGSGTGKTSGKGHKGQLARSGKTLRPGFE) are disordered. Gly residues predominate over residues 20-30 (RGPGSGTGKTS).

It belongs to the universal ribosomal protein uL15 family. In terms of assembly, part of the 50S ribosomal subunit.

In terms of biological role, binds to the 23S rRNA. The polypeptide is Large ribosomal subunit protein uL15 (Aster yellows witches'-broom phytoplasma (strain AYWB)).